A 450-amino-acid polypeptide reads, in one-letter code: tRNA-2-methylthio-N(6)-dimethylallyladenosine synthase (450 aa).

The region spanning 14-132 is the MTTase N-terminal domain; the sequence is GEFFIETWGC…FPNYLNEVKK (119 aa). Residues Cys23, Cys59, Cys93, Cys169, Cys173, and Cys176 each contribute to the [4Fe-4S] cluster site. The region spanning 155–385 is the Radical SAM core domain; sequence RKNSMKAFVT…VEVLNEISAK (231 aa). A TRAM domain is found at 388–450; it reads KAYEGKIEEV…NSFSLTGEEI (63 aa).

This sequence belongs to the methylthiotransferase family. MiaB subfamily. Monomer. It depends on [4Fe-4S] cluster as a cofactor.

The protein localises to the cytoplasm. The catalysed reaction is N(6)-dimethylallyladenosine(37) in tRNA + (sulfur carrier)-SH + AH2 + 2 S-adenosyl-L-methionine = 2-methylsulfanyl-N(6)-dimethylallyladenosine(37) in tRNA + (sulfur carrier)-H + 5'-deoxyadenosine + L-methionine + A + S-adenosyl-L-homocysteine + 2 H(+). Its function is as follows. Catalyzes the methylthiolation of N6-(dimethylallyl)adenosine (i(6)A), leading to the formation of 2-methylthio-N6-(dimethylallyl)adenosine (ms(2)i(6)A) at position 37 in tRNAs that read codons beginning with uridine. This chain is tRNA-2-methylthio-N(6)-dimethylallyladenosine synthase, found in Clostridium botulinum (strain ATCC 19397 / Type A).